The chain runs to 213 residues: Kynurenine formamidase (213 aa).

Trp18 is a substrate binding site. Positions 48, 52, and 54 each coordinate Zn(2+). The active-site Proton donor/acceptor is the His58. 2 residues coordinate Zn(2+): His160 and Glu172.

It belongs to the Cyclase 1 superfamily. KynB family. Homodimer. Requires Zn(2+) as cofactor.

The enzyme catalyses N-formyl-L-kynurenine + H2O = L-kynurenine + formate + H(+). It participates in amino-acid degradation; L-tryptophan degradation via kynurenine pathway; L-kynurenine from L-tryptophan: step 2/2. In terms of biological role, catalyzes the hydrolysis of N-formyl-L-kynurenine to L-kynurenine, the second step in the kynurenine pathway of tryptophan degradation. This is Kynurenine formamidase from Burkholderia ambifaria (strain MC40-6).